The chain runs to 248 residues: Probable phosphatase VS_II0429 (248 aa).

Residues H8, H10, H16, H41, E74, H102, H132, D194, and H196 each coordinate Zn(2+).

This sequence belongs to the PHP family. Zn(2+) is required as a cofactor.

This is Probable phosphatase VS_II0429 from Vibrio atlanticus (strain LGP32) (Vibrio splendidus (strain Mel32)).